Here is a 100-residue protein sequence, read N- to C-terminus: NAD(P)H-quinone oxidoreductase subunit 4L, chloroplastic (100 aa).

3 helical membrane-spanning segments follow: residues 1–21, 29–49, and 60–80; these read MLEH…FGLI, ALMC…TFSN, and IFAI…LAIV.

Belongs to the complex I subunit 4L family. NDH is composed of at least 16 different subunits, 5 of which are encoded in the nucleus.

It localises to the plastid. The protein localises to the chloroplast thylakoid membrane. It catalyses the reaction a plastoquinone + NADH + (n+1) H(+)(in) = a plastoquinol + NAD(+) + n H(+)(out). It carries out the reaction a plastoquinone + NADPH + (n+1) H(+)(in) = a plastoquinol + NADP(+) + n H(+)(out). NDH shuttles electrons from NAD(P)H:plastoquinone, via FMN and iron-sulfur (Fe-S) centers, to quinones in the photosynthetic chain and possibly in a chloroplast respiratory chain. The immediate electron acceptor for the enzyme in this species is believed to be plastoquinone. Couples the redox reaction to proton translocation, and thus conserves the redox energy in a proton gradient. The chain is NAD(P)H-quinone oxidoreductase subunit 4L, chloroplastic from Physcomitrium patens (Spreading-leaved earth moss).